The primary structure comprises 317 residues: Apolipoprotein E (317 aa).

The signal sequence occupies residues 1–18 (MKVLWAALLVTFLAGCQA). O-linked (GalNAc...) threonine glycosylation is found at T26 and T36. 8 tandem repeats follow at residues 80-101 (ALMDETMKELKAYKSELEEQLT), 102-123 (PVAEETRARLSKELQAAQARLG), 124-145 (ADMEDVCGRLVQYRGEVQAMLG), 146-167 (QSTEELRVRLASHLRKLRKRLL), 168-189 (RDADDLQKRLAVYQAGAREGAE), 190-211 (RGLSAIRERLGPLVEQGRVRAA), 212-233 (TVGSLAGQPLQERAQAWGERLR), and 234-255 (ARMEEMGSRTRDRLDEVKEQVA). An 8 X 22 AA approximate tandem repeats region spans residues 80–255 (ALMDETMKEL…RLDEVKEQVA (176 aa)). K93 is a glycosylation site (N-linked (Glc) (glycation) lysine). M143 bears the Methionine sulfoxide mark. At S147 the chain carries Phosphoserine; by FAM20C. Residues 158-168 (HLRKLRKRLLR) form an LDL and other lipoprotein receptors binding region. 162–165 (LRKR) contributes to the heparin binding site. Positions 210–290 (AATVGSLAGQ…SWFEPLVEDM (81 aa)) are lipid-binding and lipoprotein association. An O-linked (GalNAc...) threonine glycan is attached at T212. 229–236 (GERLRARM) is a binding site for heparin. Residues 266 to 317 (QQIRLQAEAFQARLKSWFEPLVEDMQRQWAGLVEKVQAAVGTSAAPVPSDNH) are homooligomerization. The tract at residues 278–290 (RLKSWFEPLVEDM) is specificity for association with VLDL. Residue T307 is glycosylated (O-linked (GalNAc...) threonine). O-linked (GalNAc...) serine glycosylation is found at S308 and S314.

It belongs to the apolipoprotein A1/A4/E family. Homotetramer. May interact with ABCA1; functionally associated with ABCA1 in the biogenesis of HDLs. May interact with APP/A4 amyloid-beta peptide; the interaction is extremely stable in vitro but its physiological significance is unclear. May interact with MAPT. May interact with MAP2. In the cerebrospinal fluid, interacts with secreted SORL1. Interacts with PMEL; this allows the loading of PMEL luminal fragment on ILVs to induce fibril nucleation. As to quaternary structure, (Microbial infection) Interacts with hepatitis C virus (HCV) envelope glycoprotein E2; this interaction is required for HCV infectivity and production. Post-translationally, APOE exists as multiple glycosylated and sialylated glycoforms within cells and in plasma. The extent of glycosylation and sialylation are tissue and context specific. Plasma APOE undergoes desialylation and is less glycosylated and sialylated than the cellular form. Glycosylation is not required for proper expression and secretion. O-glycosylated with core 1 or possibly core 8 glycans. Thr-307 and Ser-314 are minor glycosylation sites compared to Ser-308. In terms of processing, glycated in plasma VLDL of normal subjects, and of hyperglycemic diabetic patients at a higher level (2-3 fold). Phosphorylated by FAM20C in the extracellular medium. Post-translationally, undergoes C-terminal proteolytic processing in neurons. C-terminally truncated APOE has a tendency to form neurotoxic intracellular neurofibrillary tangle-like inclusions in neurons. Produced by several tissues and cell types and mainly found associated with lipid particles in the plasma, the interstitial fluid and lymph. Mainly synthesized by liver hepatocytes. Significant quantities are also produced in brain, mainly by astrocytes and glial cells in the cerebral cortex, but also by neurons in frontal cortex and hippocampus. It is also expressed by cells of the peripheral nervous system. Also expressed by adrenal gland, testis, ovary, skin, kidney, spleen and adipose tissue and macrophages in various tissues.

The protein localises to the secreted. Its subcellular location is the extracellular space. It localises to the extracellular matrix. The protein resides in the extracellular vesicle. It is found in the endosome. The protein localises to the multivesicular body. APOE is an apolipoprotein, a protein associating with lipid particles, that mainly functions in lipoprotein-mediated lipid transport between organs via the plasma and interstitial fluids. APOE is a core component of plasma lipoproteins and is involved in their production, conversion and clearance. Apolipoproteins are amphipathic molecules that interact both with lipids of the lipoprotein particle core and the aqueous environment of the plasma. As such, APOE associates with chylomicrons, chylomicron remnants, very low density lipoproteins (VLDL) and intermediate density lipoproteins (IDL) but shows a preferential binding to high-density lipoproteins (HDL). It also binds a wide range of cellular receptors including the LDL receptor/LDLR, the LDL receptor-related proteins LRP1, LRP2 and LRP8 and the very low-density lipoprotein receptor/VLDLR that mediate the cellular uptake of the APOE-containing lipoprotein particles. Finally, APOE also has a heparin-binding activity and binds heparan-sulfate proteoglycans on the surface of cells, a property that supports the capture and the receptor-mediated uptake of APOE-containing lipoproteins by cells. A main function of APOE is to mediate lipoprotein clearance through the uptake of chylomicrons, VLDLs, and HDLs by hepatocytes. APOE is also involved in the biosynthesis by the liver of VLDLs as well as their uptake by peripheral tissues ensuring the delivery of triglycerides and energy storage in muscle, heart and adipose tissues. By participating in the lipoprotein-mediated distribution of lipids among tissues, APOE plays a critical role in plasma and tissues lipid homeostasis. APOE is also involved in two steps of reverse cholesterol transport, the HDLs-mediated transport of cholesterol from peripheral tissues to the liver, and thereby plays an important role in cholesterol homeostasis. First, it is functionally associated with ABCA1 in the biogenesis of HDLs in tissues. Second, it is enriched in circulating HDLs and mediates their uptake by hepatocytes. APOE also plays an important role in lipid transport in the central nervous system, regulating neuron survival and sprouting. APOE is also involved in innate and adaptive immune responses, controlling for instance the survival of myeloid-derived suppressor cells. Binds to the immune cell receptor LILRB4. APOE may also play a role in transcription regulation through a receptor-dependent and cholesterol-independent mechanism, that activates MAP3K12 and a non-canonical MAPK signal transduction pathway that results in enhanced AP-1-mediated transcription of APP. Functionally, (Microbial infection) Through its interaction with HCV envelope glycoprotein E2, participates in the attachment of HCV to HSPGs and other receptors (LDLr, VLDLr, and SR-B1) on the cell surface and to the assembly, maturation and infectivity of HCV viral particles. This interaction is probably promoted via the up-regulation of cellular autophagy by the virus. This is Apolipoprotein E from Homo sapiens (Human).